Consider the following 80-residue polypeptide: DNA-binding protein HU-like (80 aa).

It belongs to the bacterial histone-like protein family.

Functionally, histone-like DNA-binding protein which is capable of wrapping DNA to stabilize it, and thus to prevent its denaturation under extreme environmental conditions. The sequence is that of DNA-binding protein HU-like from Rickettsia conorii (strain ATCC VR-613 / Malish 7).